The following is a 347-amino-acid chain: UPF0284 protein YN1551_0030 (347 aa).

It belongs to the UPF0284 family.

This chain is UPF0284 protein YN1551_0030, found in Saccharolobus islandicus (strain Y.N.15.51 / Yellowstone #2) (Sulfolobus islandicus).